The primary structure comprises 59 residues: Cuticle protein 16 isoform D (59 aa).

This is Cuticle protein 16 isoform D from Limulus polyphemus (Atlantic horseshoe crab).